A 604-amino-acid chain; its full sequence is Ribosome-inactivating protein PMRIPm (604 aa).

Positions 1 to 43 (MRVVAAILYINVVVALICGLGIQGGALDLQDYPSVSFQGDAMQ) are cleaved as a signal peptide. Glu-211 is an active-site residue. Cystine bridges form between Cys-301–Cys-332, Cys-348–Cys-367, and Cys-392–Cys-409. 2 consecutive Ricin B-type lectin domains span residues 335-463 (GEPT…WRVG) and 466-598 (VEPI…WLTV). The 1-alpha repeat unit spans residues 345–387 (AGWCVDVKDGRDNDGNPIQVLSCGDGQERKQQWTFHRDGTIRS). The stretch at 389–429 (LGKCMTAYGFKHGEYVMIYDCDTAIAGANKWVVSIDGTITN) is one 1-beta repeat. The stretch at 432–465 (SGLVLTAPRGATGTTLLVEKNVHAARQCWRVGDD) is one 1-gamma repeat. Residues 477–521 (QEKCLEANYLENTNVSRYTKVFLDDCVLDRQQQRWALYSDGTIRA) form a 2-alpha repeat. The cysteines at positions 480 and 502 are disulfide-linked. An N-linked (GlcNAc...) asparagine glycan is attached at Asn-490. Residues 525-563 (RSLRVTADGHRSLDSIIILACKGWGNQRWVFNTDGTILN) form a 2-beta repeat. One copy of the 2-gamma repeat lies at 566–599 (AKLVMDVKDSDVSLLQIILHQSTGKPNQKWLTVT).

It belongs to the ribosome-inactivating protein family. Type 2 RIP subfamily. As to quaternary structure, disulfide-linked dimer of A and B chains. In terms of processing, the precursor is processed in two chains, A and B, that are linked by a disulfide bond. Post-translationally, glycosylated. The N-terminus is blocked. In terms of tissue distribution, expressed in rhizome and abundantly in leaves (at protein level).

It catalyses the reaction Endohydrolysis of the N-glycosidic bond at one specific adenosine on the 28S rRNA.. Strongly inhibited by asialofetuin and asialomucin. Its function is as follows. Gal/GalNAc-specific agglutinin. Behaves as a type-2 ribosome-inactivating protein. Inhibits mammalian ribosomes. The A chain is responsible for inhibiting protein synthesis through the catalytic inactivation of 60S ribosomal subunits by removing adenine from position 4,324 of 28S rRNA. The B chain binds to cell receptors and probably facilitates the entry into the cell of the A chain; B chains are also responsible for cell agglutination (lectin activity). Involved in plant defense against insects. Has very low cytotoxic activity against the human tumor cell line Molt4, but higher against CEM. The protein is Ribosome-inactivating protein PMRIPm of Polygonatum multiflorum (Solomon's seal).